A 347-amino-acid polypeptide reads, in one-letter code: Protein PET130 (347 aa).

It localises to the mitochondrion matrix. This chain is Protein PET130 (PET130), found in Saccharomyces cerevisiae (strain ATCC 204508 / S288c) (Baker's yeast).